The sequence spans 41 residues: Photosystem II reaction center protein Y (41 aa).

The helical transmembrane segment at 5–23 (VLIVLAPVIIAGSWALFNI) threads the bilayer.

This sequence belongs to the PsbY family. In terms of assembly, PSII is composed of 1 copy each of membrane proteins PsbA, PsbB, PsbC, PsbD, PsbE, PsbF, PsbH, PsbI, PsbJ, PsbK, PsbL, PsbM, PsbT, PsbX, PsbY, PsbZ, Psb30/Ycf12, peripheral proteins PsbO, CyanoQ (PsbQ), PsbU, PsbV and a large number of cofactors. It forms dimeric complexes.

The protein resides in the cellular thylakoid membrane. In terms of biological role, loosely associated component of the core of photosystem II (PSII), it is not always seen in crystals. PSII is a light-driven water plastoquinone oxidoreductase, using light energy to abstract electrons from H(2)O, generating a proton gradient subsequently used for ATP formation. The chain is Photosystem II reaction center protein Y from Gloeothece citriformis (strain PCC 7424) (Cyanothece sp. (strain PCC 7424)).